A 405-amino-acid polypeptide reads, in one-letter code: Teichoic acid D-alanyltransferase (405 aa).

At 1 to 9 the chain is on the extracellular side; sequence MLNLQPYEN. Residues 10 to 29 form a helical membrane-spanning segment; that stretch reads PQYFVYLIIALLPVIIGMFK. Residues 30–33 lie on the Cytoplasmic side of the membrane; sequence GFRM. Residues 34 to 49 traverse the membrane as a helical segment; that stretch reads HWYESIFSLVFLVLIF. Topologically, residues 50 to 53 are extracellular; that stretch reads DADK. The helical transmembrane segment at 54-80 threads the bilayer; that stretch reads WPQGKALLGYVVFNLLLVYAYFKYRTR. Topologically, residues 81-86 are cytoplasmic; the sequence is EGSKNS. The helical transmembrane segment at 87–111 threads the bilayer; sequence TAVFYLSVALGIAHVAVVKFTPLFQ. Residues 112-121 are Extracellular-facing; the sequence is HHGSILGFLG. Residues 122 to 138 traverse the membrane as a helical segment; that stretch reads ISYLTFRVVGTIMEIRD. The Cytoplasmic segment spans residues 139 to 145; sequence GSIKDLN. The stretch at 146–175 is an intramembrane region; the sequence is MWKFIQFLLFFPTISSGPIDRYRRFVKDYD. The Cytoplasmic portion of the chain corresponds to 176-179; sequence RVPD. Residues 180–223 form a helical membrane-spanning segment; sequence PEHYAQLVTKAIHYLMLGFLYKFILGYIFGTLWLPSVEHMAMAS. The Extracellular segment spans residues 224–232; that stretch reads RGGAFLGLS. Residues 233 to 264 traverse the membrane as a helical segment; sequence WPVVGVMYAYSGYLFFDFAGYSLFAVAISYLM. Residues 265-274 lie on the Cytoplasmic side of the membrane; that stretch reads GIETPMNFNK. Residues 275-310 lie within the membrane without spanning it; sequence PWSHITSRLLNRWQLSLSFWFRDYIYMRFVFFMMKH. Residues 311 to 315 lie on the Cytoplasmic side of the membrane; sequence KWIKS. Residues 316–335 traverse the membrane as a helical segment; sequence RVWTAFVGYLVLFLIMGIWH. His335 is a catalytic residue. Residues 336 to 338 are Extracellular-facing; it reads GET. The chain crosses the membrane as a helical span at residues 339 to 372; the sequence is WYYIVYGLFHAMLINLTDAWLRFKKKHKDFFPHN. Topologically, residues 373–378 are cytoplasmic; the sequence is RATHYP. A helical transmembrane segment spans residues 379 to 399; the sequence is SPFSMTANAVCFSFLIFSGFL. Topologically, residues 400–405 are extracellular; sequence DKLWFH.

This sequence belongs to the membrane-bound acyltransferase family.

The protein localises to the cell membrane. It functions in the pathway cell wall biogenesis; lipoteichoic acid biosynthesis. In terms of biological role, O-acyltransferase that catalyzes D-alanylation of both teichoic acid and lipoteichoic acid (LTA). D-alanylation of LTA plays an important role in modulating the properties of the cell wall in Gram-positive bacteria, influencing the net charge of the cell wall. Catalyzes D-alanylation from DltC carrier protein. The protein is Teichoic acid D-alanyltransferase of Lacticaseibacillus rhamnosus (Lactobacillus rhamnosus).